Reading from the N-terminus, the 318-residue chain is Mevalonate 3-kinase (318 aa).

A substrate-binding site is contributed by leucine 19. Residues 96-100 (YSSQN) and 105-108 (SGSS) contribute to the ATP site. Substrate is bound by residues glutamate 140 and arginine 144. ATP-binding residues include arginine 185 and serine 188.

This sequence belongs to the GHMP kinase family. As to quaternary structure, homodimer.

It catalyses the reaction (R)-mevalonate + ATP = (R)-3-phosphomevalonate + ADP + H(+). The protein operates within isoprenoid biosynthesis; isopentenyl diphosphate biosynthesis via mevalonate pathway. Catalyzes the phosphorylation of mevalonate (MVA) to yield mevalonate-3-phosphate. Functions in an alternative mevalonate pathway, only present in extreme acidophiles of the Thermoplasmatales order, which passes through mevalonate 3-phosphate rather than mevalonate 5-phosphate. The polypeptide is Mevalonate 3-kinase (Thermoplasma acidophilum (strain ATCC 25905 / DSM 1728 / JCM 9062 / NBRC 15155 / AMRC-C165)).